We begin with the raw amino-acid sequence, 66 residues long: Large ribosomal subunit protein bL33c (66 aa).

Belongs to the bacterial ribosomal protein bL33 family.

Its subcellular location is the plastid. The protein localises to the chloroplast. This is Large ribosomal subunit protein bL33c from Barbarea verna (Land cress).